The primary structure comprises 96 residues: Sec-independent protein translocase protein TatA (96 aa).

The helical transmembrane segment at 1-21 (MGFSSIWHWIIVLVVVLLLFG) threads the bilayer. The tract at residues 42–96 (GMADDEDDEAASVSAERRGIEDGKPAQTIYPPQQPQQPQQPPQQPPVHRDDAPRG) is disordered. The segment covering 56–65 (AERRGIEDGK) has biased composition (basic and acidic residues). Residues 73–86 (PQQPQQPQQPPQQP) show a composition bias toward pro residues.

It belongs to the TatA/E family. In terms of assembly, the Tat system comprises two distinct complexes: a TatABC complex, containing multiple copies of TatA, TatB and TatC subunits, and a separate TatA complex, containing only TatA subunits. Substrates initially bind to the TatABC complex, which probably triggers association of the separate TatA complex to form the active translocon.

The protein localises to the cell inner membrane. In terms of biological role, part of the twin-arginine translocation (Tat) system that transports large folded proteins containing a characteristic twin-arginine motif in their signal peptide across membranes. TatA could form the protein-conducting channel of the Tat system. The sequence is that of Sec-independent protein translocase protein TatA from Rhodospirillum rubrum (strain ATCC 11170 / ATH 1.1.1 / DSM 467 / LMG 4362 / NCIMB 8255 / S1).